The primary structure comprises 304 residues: Acetyl-coenzyme A carboxylase carboxyl transferase subunit beta (304 aa).

The CoA carboxyltransferase N-terminal domain maps to 26 to 295; it reads VWTKCTSCEQ…PFVEPELVEN (270 aa). Zn(2+)-binding residues include Cys-30, Cys-33, Cys-49, and Cys-52. The C4-type zinc-finger motif lies at 30 to 52; the sequence is CTSCEQVLYRDELRRHLEVCPKC. Positions 281–304 are disordered; sequence SNKPSPFVEPELVENEEQSKSDNE.

Belongs to the AccD/PCCB family. Acetyl-CoA carboxylase is a heterohexamer composed of biotin carboxyl carrier protein (AccB), biotin carboxylase (AccC) and two subunits each of ACCase subunit alpha (AccA) and ACCase subunit beta (AccD). Zn(2+) is required as a cofactor.

The protein resides in the cytoplasm. It carries out the reaction N(6)-carboxybiotinyl-L-lysyl-[protein] + acetyl-CoA = N(6)-biotinyl-L-lysyl-[protein] + malonyl-CoA. It functions in the pathway lipid metabolism; malonyl-CoA biosynthesis; malonyl-CoA from acetyl-CoA: step 1/1. Component of the acetyl coenzyme A carboxylase (ACC) complex. Biotin carboxylase (BC) catalyzes the carboxylation of biotin on its carrier protein (BCCP) and then the CO(2) group is transferred by the transcarboxylase to acetyl-CoA to form malonyl-CoA. The protein is Acetyl-coenzyme A carboxylase carboxyl transferase subunit beta of Pasteurella multocida (strain Pm70).